The following is a 432-amino-acid chain: Serine--tRNA ligase (432 aa).

236–238 (TSE) is a binding site for L-serine. ATP is bound at residue 267-269 (RSE). Glutamate 290 is a binding site for L-serine. 354–357 (EISS) is a binding site for ATP. An L-serine-binding site is contributed by serine 390.

This sequence belongs to the class-II aminoacyl-tRNA synthetase family. Type-1 seryl-tRNA synthetase subfamily. Homodimer. The tRNA molecule binds across the dimer.

Its subcellular location is the cytoplasm. It catalyses the reaction tRNA(Ser) + L-serine + ATP = L-seryl-tRNA(Ser) + AMP + diphosphate + H(+). The catalysed reaction is tRNA(Sec) + L-serine + ATP = L-seryl-tRNA(Sec) + AMP + diphosphate + H(+). The protein operates within aminoacyl-tRNA biosynthesis; selenocysteinyl-tRNA(Sec) biosynthesis; L-seryl-tRNA(Sec) from L-serine and tRNA(Sec): step 1/1. Functionally, catalyzes the attachment of serine to tRNA(Ser). Is also able to aminoacylate tRNA(Sec) with serine, to form the misacylated tRNA L-seryl-tRNA(Sec), which will be further converted into selenocysteinyl-tRNA(Sec). The sequence is that of Serine--tRNA ligase from Pseudoalteromonas atlantica (strain T6c / ATCC BAA-1087).